Consider the following 93-residue polypeptide: Large ribosomal subunit protein uL23cz/uL23cy (93 aa).

Belongs to the universal ribosomal protein uL23 family. As to quaternary structure, part of the 50S ribosomal subunit.

It localises to the plastid. The protein resides in the chloroplast. Its function is as follows. Binds to 23S rRNA. The chain is Large ribosomal subunit protein uL23cz/uL23cy (rpl23-A) from Drimys granadensis.